The chain runs to 972 residues: FHF complex subunit HOOK-interacting protein 1B (972 aa).

Disordered regions lie at residues 465–548 and 573–644; these read APSP…GELE and SAPY…SWPE. Position 467 is a phosphoserine (Ser467). Low complexity predominate over residues 478 to 501; sequence RGPGSPSVDSSSVTTVPRPSTPSR. Ser510, Ser523, Ser529, and Ser533 each carry phosphoserine. Low complexity predominate over residues 523 to 535; it reads SPGLSASPASSPG. Residues Ser859 and Ser897 each carry the phosphoserine modification.

This sequence belongs to the FHIP family. As to quaternary structure, component of the FTS/Hook/FHIP complex (FHF complex), composed of AKTIP/FTS, FHIP1B, and one or more members of the Hook family of proteins HOOK1, HOOK2, and HOOK3. The FHF complex associates with the homotypic vesicular sorting complex (the HOPS complex).

In terms of biological role, component of the FTS/Hook/FHIP complex (FHF complex). The FHF complex may function to promote vesicle trafficking and/or fusion via the homotypic vesicular protein sorting complex (the HOPS complex). FHF complex promotes the distribution of AP-4 complex to the perinuclear area of the cell. The protein is FHF complex subunit HOOK-interacting protein 1B of Homo sapiens (Human).